The sequence spans 385 residues: MIATPVKIESVETILVDVPTIRPHRLSVATMNCQTLVLVRIRCADGVVGVGEGTTIGGLAYGEESPESIKVNIDTYFAPLLKGLDATRPGAAMATLRGLFQGNRFARSAVETALFDAQAQRLGVPLSELFGGRIRDSVDVAWTLASGDTTRDIDEAERVFEAKRHRVFKLKIGSRALADDVAHVVAIQKALQGRGEVRVDVNQAWTESEAIWAGKRFADASVALIEQPIAAENRAGLKRLTDLAQVPIMADEALHGPADAFALASARAADVFAVKIAQSGGLSGAANVAAIALAANIDLYGGTMLEGAVGTIASAQLFSTFGELKWGTELFGPLLLTEEILTEPLRYENFVLHLPQGPGLGITLDWDKIDRLRRDTRKGASITMN.

Lys-171 is an active-site residue. Mn(2+)-binding residues include Glu-226 and Asp-251.

The protein belongs to the mandelate racemase/muconate lactonizing enzyme family. As to quaternary structure, homooctamer. Mn(2+) serves as cofactor.

It carries out the reaction (S)-muconolactone = cis,cis-muconate + H(+). Its pathway is aromatic compound metabolism; beta-ketoadipate pathway; 5-oxo-4,5-dihydro-2-furylacetate from catechol: step 2/3. In terms of biological role, catalyzes a syn cycloisomerization. The polypeptide is Muconate cycloisomerase 1-2 (catB2) (Acinetobacter lwoffii).